The sequence spans 357 residues: MSLTRLLIRDFRNIETADLALSPGFNFLVGANGSGKTSVLEAIYTLGHGRAFRSLQIGRVIRHEQEAFVLHGRLQGEERETAIGLTKDKQGDSKVRIDGTDGHKVAELAHLMPMQLITPEGFTLLNGGPKYRRAFLDWGCFHNEPGFFTAWSNLKRLLKQRNAALRQVTRYEQLRPWDKELIPLAEQISTWRAEYSGGIAADMADTCKQFLPEFSLTFSFQRGWEKETEYAEVLERNFERDRQLTYTAHGPHKADLRIRADGAPVEDTLSRGQLKLLMCALRLAQGEFLTRESGRRCLYLIDDFASELDDERRGLLASRLKATQSQVFVSAISAEHVIDMSDENSKMFTVEKGKITD.

ATP is bound at residue 30-37 (GANGSGKT).

Belongs to the RecF family.

The protein localises to the cytoplasm. Functionally, the RecF protein is involved in DNA metabolism; it is required for DNA replication and normal SOS inducibility. RecF binds preferentially to single-stranded, linear DNA. It also seems to bind ATP. The polypeptide is DNA replication and repair protein RecF (Escherichia coli O6:K15:H31 (strain 536 / UPEC)).